A 261-amino-acid chain; its full sequence is Ribosomal RNA small subunit methyltransferase J (261 aa).

S-adenosyl-L-methionine contacts are provided by residues 101 to 102 (RD), 117 to 118 (ER), 153 to 154 (SS), and D176.

Belongs to the methyltransferase superfamily. RsmJ family.

Its subcellular location is the cytoplasm. It carries out the reaction guanosine(1516) in 16S rRNA + S-adenosyl-L-methionine = N(2)-methylguanosine(1516) in 16S rRNA + S-adenosyl-L-homocysteine + H(+). In terms of biological role, specifically methylates the guanosine in position 1516 of 16S rRNA. The chain is Ribosomal RNA small subunit methyltransferase J from Vibrio cholerae serotype O1 (strain ATCC 39315 / El Tor Inaba N16961).